We begin with the raw amino-acid sequence, 276 residues long: Small ribosomal subunit protein uS2 (276 aa).

The protein belongs to the universal ribosomal protein uS2 family.

This chain is Small ribosomal subunit protein uS2, found in Chlamydia abortus (strain DSM 27085 / S26/3) (Chlamydophila abortus).